A 61-amino-acid chain; its full sequence is Large ribosomal subunit protein uL29 (61 aa).

It belongs to the universal ribosomal protein uL29 family.

The chain is Large ribosomal subunit protein uL29 from Campylobacter jejuni subsp. jejuni serotype O:6 (strain 81116 / NCTC 11828).